The primary structure comprises 200 residues: Thymidine kinase (200 aa).

ATP-binding positions include 15 to 22 (GSMFSGKS) and 88 to 91 (DEVQ). Residue E89 is the Proton acceptor of the active site. Residues C145, C148, C183, and H186 each coordinate Zn(2+).

Belongs to the thymidine kinase family. In terms of assembly, homotetramer.

It is found in the cytoplasm. The catalysed reaction is thymidine + ATP = dTMP + ADP + H(+). The sequence is that of Thymidine kinase from Bacillus pumilus (strain SAFR-032).